Consider the following 181-residue polypeptide: uncharacterized protein (181 aa).

Transmembrane regions (helical) follow at residues 3-23 (LSQT…VLIL), 67-87 (ALLL…GLSV), 92-112 (VLGV…VLFI), and 159-179 (MFIL…LWII).

This sequence belongs to the YggT family.

Its subcellular location is the cell membrane. This is an uncharacterized protein from Haemophilus influenzae (strain ATCC 51907 / DSM 11121 / KW20 / Rd).